A 259-amino-acid chain; its full sequence is 3-dehydroquinate dehydratase (259 aa).

Residues 50 to 52 (EWR) and arginine 86 contribute to the 3-dehydroquinate site. The Proton donor/acceptor role is filled by histidine 147. Lysine 174 functions as the Schiff-base intermediate with substrate in the catalytic mechanism. Arginine 216, serine 235, and glutamine 239 together coordinate 3-dehydroquinate.

Belongs to the type-I 3-dehydroquinase family. In terms of assembly, homodimer.

The catalysed reaction is 3-dehydroquinate = 3-dehydroshikimate + H2O. Its pathway is metabolic intermediate biosynthesis; chorismate biosynthesis; chorismate from D-erythrose 4-phosphate and phosphoenolpyruvate: step 3/7. Functionally, involved in the third step of the chorismate pathway, which leads to the biosynthesis of aromatic amino acids. Catalyzes the cis-dehydration of 3-dehydroquinate (DHQ) and introduces the first double bond of the aromatic ring to yield 3-dehydroshikimate. This Geobacillus sp. (strain WCH70) protein is 3-dehydroquinate dehydratase.